Reading from the N-terminus, the 450-residue chain is Biotin carboxylase 1 (450 aa).

One can recognise a Biotin carboxylation domain in the interval 1-447; sequence MIKKLLIANR…NTKFLETYDV (447 aa). ATP is bound by residues lysine 116, lysine 158, 164 to 165, 200 to 203, and histidine 208; these read GG and EKYI. Residues 120-318 form the ATP-grasp domain; sequence RETMKQAGVP…LIKEQIKVAS (199 aa). Lysine 237 is a binding site for hydrogencarbonate. 2 residues coordinate ATP: glutamate 275 and glutamate 289. Mg(2+) is bound by residues glutamate 275, glutamate 289, and asparagine 291. 3 residues coordinate Mn(2+): glutamate 275, glutamate 289, and asparagine 291. Hydrogencarbonate is bound by residues arginine 293, valine 296, and arginine 339. The active site involves arginine 293. Arginine 339 serves as a coordination point for biotin.

Acetyl-CoA carboxylase is a heterohexamer of biotin carboxyl carrier protein, biotin carboxylase and the two subunits of carboxyl transferase in a 2:2 complex. Mg(2+) is required as a cofactor. The cofactor is Mn(2+).

The enzyme catalyses N(6)-biotinyl-L-lysyl-[protein] + hydrogencarbonate + ATP = N(6)-carboxybiotinyl-L-lysyl-[protein] + ADP + phosphate + H(+). The protein operates within lipid metabolism; malonyl-CoA biosynthesis; malonyl-CoA from acetyl-CoA: step 1/1. In terms of biological role, this protein is a component of the acetyl coenzyme A carboxylase complex; first, biotin carboxylase catalyzes the carboxylation of the carrier protein and then the transcarboxylase transfers the carboxyl group to form malonyl-CoA. The sequence is that of Biotin carboxylase 1 (accC1) from Bacillus subtilis (strain 168).